A 399-amino-acid polypeptide reads, in one-letter code: Elongation factor Tu (399 aa).

One can recognise a tr-type G domain in the interval 10-204 (KPHVNIGTIG…AVDASIPEPE (195 aa)). Residues 19-26 (GHVDHGKT) are G1. Residue 19-26 (GHVDHGKT) participates in GTP binding. Thr26 provides a ligand contact to Mg(2+). Positions 60-64 (GITIN) are G2. The tract at residues 81 to 84 (DCPG) is G3. Residues 81–85 (DCPGH) and 136–139 (NKCD) each bind GTP. Residues 136–139 (NKCD) are G4. A G5 region spans residues 174 to 176 (SGL).

It belongs to the TRAFAC class translation factor GTPase superfamily. Classic translation factor GTPase family. EF-Tu/EF-1A subfamily. As to quaternary structure, monomer.

The protein resides in the cytoplasm. It catalyses the reaction GTP + H2O = GDP + phosphate + H(+). GTP hydrolase that promotes the GTP-dependent binding of aminoacyl-tRNA to the A-site of ribosomes during protein biosynthesis. In Prochlorococcus marinus subsp. pastoris (strain CCMP1986 / NIES-2087 / MED4), this protein is Elongation factor Tu.